Consider the following 298-residue polypeptide: Epimerase family protein SSP1921 (298 aa).

The protein belongs to the NAD(P)-dependent epimerase/dehydratase family. SDR39U1 subfamily.

The chain is Epimerase family protein SSP1921 from Staphylococcus saprophyticus subsp. saprophyticus (strain ATCC 15305 / DSM 20229 / NCIMB 8711 / NCTC 7292 / S-41).